The primary structure comprises 118 residues: Large ribosomal subunit protein bL20 (118 aa).

It belongs to the bacterial ribosomal protein bL20 family.

Binds directly to 23S ribosomal RNA and is necessary for the in vitro assembly process of the 50S ribosomal subunit. It is not involved in the protein synthesizing functions of that subunit. In Bacillus anthracis (strain CDC 684 / NRRL 3495), this protein is Large ribosomal subunit protein bL20.